Consider the following 437-residue polypeptide: Enolase 1 (437 aa).

Gln-164 provides a ligand contact to (2R)-2-phosphoglycerate. The active-site Proton donor is the Glu-206. Positions 244, 289, and 316 each coordinate Mg(2+). Positions 341, 370, 371, and 392 each coordinate (2R)-2-phosphoglycerate. Lys-341 functions as the Proton acceptor in the catalytic mechanism.

It belongs to the enolase family. Mg(2+) serves as cofactor.

It localises to the cytoplasm. The protein resides in the secreted. Its subcellular location is the cell surface. It carries out the reaction (2R)-2-phosphoglycerate = phosphoenolpyruvate + H2O. The protein operates within carbohydrate degradation; glycolysis; pyruvate from D-glyceraldehyde 3-phosphate: step 4/5. Its function is as follows. Catalyzes the reversible conversion of 2-phosphoglycerate (2-PG) into phosphoenolpyruvate (PEP). It is essential for the degradation of carbohydrates via glycolysis. The polypeptide is Enolase 1 (Desulfitobacterium hafniense (strain Y51)).